A 183-amino-acid chain; its full sequence is Somatotropin (183 aa).

Residue histidine 19 participates in Zn(2+) binding. The interval 38 to 67 is disordered; it reads EEQRHSHKSSPSAFCQSETIPAPTGKEDAQ. Polar residues predominate over residues 46–56; that stretch reads SSPSAFCQSET. A disulfide bond links cysteine 52 and cysteine 156. Position 165 (glutamate 165) interacts with Zn(2+). Cysteine 173 and cysteine 181 are joined by a disulfide.

Belongs to the somatotropin/prolactin family.

Its subcellular location is the secreted. Growth hormone plays an important role in growth control and is involved in the regulation of several anabolic processes. Implicated as an osmoregulatory substance important for seawater adaptation. The polypeptide is Somatotropin (gh) (Prionace glauca (Blue shark)).